The chain runs to 379 residues: 8-amino-7-oxononanoate synthase (379 aa).

Arg-27 and Arg-34 together coordinate substrate. Residue 114 to 115 participates in pyridoxal 5'-phosphate binding; it reads GY. Position 139 (His-139) interacts with substrate. Residues Ser-187, 212–215, and 232–235 contribute to the pyridoxal 5'-phosphate site; these read DDAH and TLSK. N6-(pyridoxal phosphate)lysine is present on Lys-235. Residue Thr-344 coordinates substrate.

The protein belongs to the class-II pyridoxal-phosphate-dependent aminotransferase family. BioF subfamily. In terms of assembly, homodimer. It depends on pyridoxal 5'-phosphate as a cofactor.

The catalysed reaction is 6-carboxyhexanoyl-[ACP] + L-alanine + H(+) = (8S)-8-amino-7-oxononanoate + holo-[ACP] + CO2. The protein operates within cofactor biosynthesis; biotin biosynthesis. In terms of biological role, catalyzes the decarboxylative condensation of pimeloyl-[acyl-carrier protein] and L-alanine to produce 8-amino-7-oxononanoate (AON), [acyl-carrier protein], and carbon dioxide. This is 8-amino-7-oxononanoate synthase from Methylobacterium sp. (strain 4-46).